The sequence spans 204 residues: Thymidylate kinase (204 aa).

Residue 11–18 (GLDKSGKT) coordinates ATP.

Belongs to the thymidylate kinase family.

The enzyme catalyses dTMP + ATP = dTDP + ADP. The protein operates within pyrimidine metabolism; dTTP biosynthesis. The sequence is that of Thymidylate kinase (TMK) from Vaccinia virus (strain Ankara) (VACV).